The primary structure comprises 591 residues: Probable translation initiation factor IF-2 (591 aa).

The 215-residue stretch at Ile6–Met220 folds into the tr-type G domain. The segment at Gly15–Thr22 is G1. Residue Gly15 to Thr22 coordinates GTP. Residues Ala40–His44 form a G2 region. The tract at residues Asp76–Gly79 is G3. Residues Asp76–His80 and Thr130–Asp133 contribute to the GTP site. The interval Thr130–Asp133 is G4. The G5 stretch occupies residues Ser198–His200.

It belongs to the TRAFAC class translation factor GTPase superfamily. Classic translation factor GTPase family. IF-2 subfamily.

Its function is as follows. Function in general translation initiation by promoting the binding of the formylmethionine-tRNA to ribosomes. Seems to function along with eIF-2. In Methanoregula boonei (strain DSM 21154 / JCM 14090 / 6A8), this protein is Probable translation initiation factor IF-2.